Reading from the N-terminus, the 228-residue chain is MTVQIITIDGPSGSGKGTLAAKLAAYYQFHLLDSGALYRLLGLSLHKHDLLEKLDSHLDMCVNYARQLNIKFETSAEGTLVFLDGEDVTQTIRTERVGEYASKVAAIPELRQALFERQRAFAQTPGLVADGRDMATSIFPEANAKIYLTASAESRAERRVKQLQGMGLDAKINDILANIQARDKRDMEREVAPLKPAADAYIIDSSELTIDQVFKLMVDYVNSRTVSN.

An ATP-binding site is contributed by 10–18 (GPSGSGKGT).

It belongs to the cytidylate kinase family. Type 1 subfamily.

The protein localises to the cytoplasm. The enzyme catalyses CMP + ATP = CDP + ADP. The catalysed reaction is dCMP + ATP = dCDP + ADP. The polypeptide is Cytidylate kinase (Acinetobacter baumannii (strain AB0057)).